The primary structure comprises 201 residues: Aminoglycoside N(6')-acetyltransferase type 1 (201 aa).

One can recognise an N-acetyltransferase domain in the interval 25–192 (VTLRLMTEHD…PAVYMVQTRQ (168 aa)). Residues W51 and D154 each coordinate substrate. N159 contributes to the acetyl-CoA binding site.

Homodimer.

The enzyme catalyses kanamycin B + acetyl-CoA = N(6')-acetylkanamycin B + CoA + H(+). Catalyzes the transfer of an acetyl group from acetyl-CoA to the 6'-amino group of aminoglycoside molecules conferring resistance to antibiotics containing the purpurosamine ring including amikacin and kanamycin. This Serratia marcescens protein is Aminoglycoside N(6')-acetyltransferase type 1 (aacA4).